A 505-amino-acid chain; its full sequence is Neuronal acetylcholine receptor subunit alpha-3 (505 aa).

A signal peptide spans 1–31; the sequence is MGSGPLSLPLALSPPRLLLLLLLSLLPVARA. The Extracellular portion of the chain corresponds to 32–250; it reads SEAEHRLFER…PLFYTINLII (219 aa). N-linked (GlcNAc...) asparagine glycosylation is found at Asn-55 and Asn-172. Disulfide bonds link Cys-159–Cys-173 and Cys-223–Cys-224. A helical membrane pass occupies residues 251–266; it reads PCLLISFLTVLVFYLP. Topologically, residues 267-268 are cytoplasmic; it reads SD. A helical membrane pass occupies residues 269–285; the sequence is CGEKVTLCISVLLSLTV. Topologically, residues 286-307 are extracellular; that stretch reads FLLVITETIPSTSLVIPLIGEY. Residues 308-326 form a helical membrane-spanning segment; it reads LLFTMIFVTLSIVITVFVL. Residues 327-474 are Cytoplasmic-facing; that stretch reads NVHYRTPTTH…QDDWKYVAMV (148 aa). Residues Ser-413 and Ser-416 each carry the phosphoserine modification. The chain crosses the membrane as a helical span at residues 475–493; that stretch reads IDRIFLWVFTLVCILGTAG. Residues 494–505 are Extracellular-facing; the sequence is LFLQPLMAREDA.

Belongs to the ligand-gated ion channel (TC 1.A.9) family. Acetylcholine receptor (TC 1.A.9.1) subfamily. Alpha-3/CHRNA3 sub-subfamily. As to quaternary structure, neuronal AChR is composed of two different types of subunits: alpha and beta. CHRNA3/Alpha-3 subunit can be combined to CHRNA5/alpha-5, CHRNB2/beta-2 CHRNB3/beta-3 or CHRNB4/beta-4 to give rise to functional receptors. Forms stoichiometries such as (CHRNA3)2:(CHRNB4)3 or (CHRNA3:CHRNB4)2:CHRNB3. Part of a complex composed of STUB1/CHIP, VCP/p97, CHRNA3, and UBXN2A that modulates the ubiquitination and endoplasmic reticulum-associated degradation (ERAD) of CHRNA3. Within the complex UBXN2A acts as a scaffold protein required for the interaction of CHRNA3 with VCP/p97, this interaction also inhibits CHRNA3 ubiquitination by STUB1/CHIP and subsequently ERAD. Interacts with UBXN2A (via SEP domain), the interaction is required for the interaction of CHRNA3 in the STUB1:VCP:UBXN2A complex. Interacts with RIC3; which is required for proper folding and assembly. Interacts with LYPD6. Ubiquitinated; by STUB1/CHIP and thereafter degraded by the 26S proteosome complex.

It is found in the synaptic cell membrane. It localises to the cell membrane. The protein localises to the endoplasmic reticulum. The protein resides in the golgi apparatus. The enzyme catalyses Ca(2+)(in) = Ca(2+)(out). The catalysed reaction is K(+)(in) = K(+)(out). It carries out the reaction Na(+)(in) = Na(+)(out). Its activity is regulated as follows. Activated by a myriad of ligands such as acetylcholine, cytisine, nicotine, choline and epibatidine. The heteropentamer CHRNA3:CHRNB2 activity is blocked by alpha-conotoxins ImI, ImII, PnIA, GID and MII. The heteropentamer CHRNA3:CHRNB4 activity is blocked by the alpha-conotoxin ImI and AuIB. Component of neuronal acetylcholine receptors (nAChRs) that function as pentameric, ligand-gated cation channels with high calcium permeability among other activities. nAChRs are excitatory neurotrasnmitter receptors formed by a collection of nAChR subunits known to mediate synaptic transmission in the nervous system and the neuromuscular junction. Each nAchR subunit confers differential attributes to channel properties, including activation, deactivation and desensitization kinetics, pH sensitivity, cation permeability, and binding to allosteric modulators. CHRNA3 forms heteropentameric neuronal acetylcholine receptors with CHRNB2 and CHRNB4, with CHRNA5, and CHRNB3 as accesory subunits. CHRNA3:CHRNB4 being predominant in neurons of the autonomic ganglia, it is known as ganglionic nicotinic receptor. CHRNA3:CHRNB4 or CHRNA3:CHRNA5:CHRNB4 play also an important role in the habenulo-interpeduncular tract, modulating the mesolimbic dopamine system and affecting reward circuits and addiction. Hypothalamic CHRNA3:CHRNB4 nAChR activation by nicotine leads to activation of POMC neurons and a decrease in food intake. Also expressed in the urothelium where it modulates reflex bladder activity by increasing intracellular calcium through extracellular influx and basal ATP release. The protein is Neuronal acetylcholine receptor subunit alpha-3 of Homo sapiens (Human).